Consider the following 35-residue polypeptide: Defensin-B (35 aa).

Cystine bridges form between Cys4–Cys25, Cys10–Cys33, and Cys14–Cys35.

The protein resides in the secreted. Its function is as follows. Has antibacterial activity against M.luteus and E.coli. This is Defensin-B from Mytilus edulis (Blue mussel).